Here is a 521-residue protein sequence, read N- to C-terminus: Glutamate--tRNA ligase (521 aa).

The 'HIGH' region motif lies at 30 to 40 (PSPTGYLHVGG). The 'KMSKS' region signature appears at 277 to 281 (KLSKR). Lysine 280 is a binding site for ATP.

This sequence belongs to the class-I aminoacyl-tRNA synthetase family. Glutamate--tRNA ligase type 1 subfamily. As to quaternary structure, monomer.

The protein resides in the cytoplasm. The enzyme catalyses tRNA(Glu) + L-glutamate + ATP = L-glutamyl-tRNA(Glu) + AMP + diphosphate. In terms of biological role, catalyzes the attachment of glutamate to tRNA(Glu) in a two-step reaction: glutamate is first activated by ATP to form Glu-AMP and then transferred to the acceptor end of tRNA(Glu). This chain is Glutamate--tRNA ligase, found in Chlorobium phaeovibrioides (strain DSM 265 / 1930) (Prosthecochloris vibrioformis (strain DSM 265)).